Consider the following 107-residue polypeptide: MASTAARRLAWVAVRPGALWSGPRGRRGGDVYTVPGSSGLSQVPSRSVIVTRSGAILPKPVKMSFGLLRVFSIVIPFLYVGTLISKNFAALLEEHDIFVPEDDDDDD.

A mitochondrion-targeting transit peptide spans 1 to 47 (MASTAARRLAWVAVRPGALWSGPRGRRGGDVYTVPGSSGLSQVPSRS). Residues 48 to 65 (VIVTRSGAILPKPVKMSF) lie on the Mitochondrial matrix side of the membrane. The chain crosses the membrane as a helical span at residues 66-85 (GLLRVFSIVIPFLYVGTLIS). Residues 81–85 (GTLIS) carry the GXXXX[G/A/S] motif. The Mitochondrial intermembrane segment spans residues 86–107 (KNFAALLEEHDIFVPEDDDDDD).

The protein belongs to the SMDT1/EMRE family. As to quaternary structure, component of the uniplex complex, composed of MCU, EMRE/SMDT1, MICU1 and MICU2 (or MICU3) in a 4:4:1:1 stoichiometry. The number of EMRE/SMDT1 molecules is hovewer variable, ranging from 1 to 4 copies per uniplex complex, leading to uniplex complexes with distinct gatekeeping profiles. Interacts (via its C-terminal poly-Asp tail) with MCUR1; the interaction is direct. Unprocessed form interacts (via transit peptide) with MAIP1. In terms of processing, undergoes proteolytic degradation in neurons: degraded by AFG3L2 and SPG7 before SMDT1/EMRE assembly with the uniporter complex, limiting the availability of SMDT1/EMRE for MCU assembly and promoting efficient assembly of gatekeeper subunits with MCU. As to expression, widely expressed.

Its subcellular location is the mitochondrion inner membrane. Functionally, essential regulatory subunit of the mitochondrial calcium uniporter complex (uniplex), a complex that mediates calcium uptake into mitochondria. Required to bridge the calcium-sensing proteins MICU1 with the calcium-conducting subunit MCU. Acts by mediating activation of MCU and retention of MICU1 to the MCU pore, in order to ensure tight regulation of the uniplex complex and appropriate responses to intracellular calcium signaling. The polypeptide is Essential MCU regulator, mitochondrial (Mus musculus (Mouse)).